Reading from the N-terminus, the 215-residue chain is Pyrrolidone-carboxylate peptidase (215 aa).

Residues Glu80, Cys143, and His167 contribute to the active site.

The protein belongs to the peptidase C15 family. Homotetramer.

The protein localises to the cytoplasm. The catalysed reaction is Release of an N-terminal pyroglutamyl group from a polypeptide, the second amino acid generally not being Pro.. Its function is as follows. Removes 5-oxoproline from various penultimate amino acid residues except L-proline. This is Pyrrolidone-carboxylate peptidase from Bacillus cereus (strain B4264).